Here is a 399-residue protein sequence, read N- to C-terminus: Glutathione S-transferase LANCL1 (399 aa).

At Ala-2 the chain carries N-acetylalanine. Lys-142 is modified (N6-acetyllysine). Residue Cys-276 participates in Zn(2+) binding. Lys-317 serves as a coordination point for glutathione. Positions 322 and 323 each coordinate Zn(2+). 364–367 (RTAD) provides a ligand contact to glutathione.

This sequence belongs to the LanC-like protein family. Interacts with the C-terminal of STOM. Interacts with the EPS8 SH3 domain. Interaction with EPS8 is inhibited by glutathione binding. Detected in spinal cord (at protein level). Ubiquitous. Strongly expressed in brain, testis, alveolar macrophages and epithelial cells of the lung, kidney and intestine. Expression in brain increases during the first postnatal month and remaining high in adult.

Its subcellular location is the cytoplasm. The protein resides in the cell membrane. The enzyme catalyses RX + glutathione = an S-substituted glutathione + a halide anion + H(+). It catalyses the reaction 1-chloro-2,4-dinitrobenzene + glutathione = 2,4-dinitrophenyl-S-glutathione + chloride + H(+). In terms of biological role, functions as a glutathione transferase. Catalyzes conjugation of the glutathione (GSH) to artificial substrates 1-chloro-2,4-dinitrobenzene (CDNB) and p-nitrophenyl acetate. Mitigates neuronal oxidative stress during normal postnatal development and in response to oxidative stresses probably through GSH antioxidant defense mechanism. May play a role in EPS8 signaling. Binds glutathione. The protein is Glutathione S-transferase LANCL1 of Mus musculus (Mouse).